The sequence spans 1005 residues: Probable beta-galactosidase A (1005 aa).

Positions 1–18 are cleaved as a signal peptide; that stretch reads MKLLSVAAVALLAAQAAG. Substrate-binding residues include Tyr-96, Asn-140, Ala-141, and Glu-142. An N-linked (GlcNAc...) asparagine glycan is attached at Asn-156. Asn-199 provides a ligand contact to substrate. The active-site Proton donor is the Glu-200. The cysteines at positions 205 and 206 are disulfide-linked. Position 260 (Tyr-260) interacts with substrate. Cys-266 and Cys-315 form a disulfide bridge. The Nucleophile role is filled by Glu-298. Tyr-364 contributes to the substrate binding site. N-linked (GlcNAc...) asparagine glycans are attached at residues Asn-373, Asn-402, Asn-453, Asn-478, Asn-522, Asn-622, Asn-760, Asn-777, Asn-805, and Asn-914.

The protein belongs to the glycosyl hydrolase 35 family.

The protein resides in the secreted. It catalyses the reaction Hydrolysis of terminal non-reducing beta-D-galactose residues in beta-D-galactosides.. Functionally, cleaves beta-linked terminal galactosyl residues from gangliosides, glycoproteins, and glycosaminoglycans. This is Probable beta-galactosidase A (lacA) from Aspergillus flavus (strain ATCC 200026 / FGSC A1120 / IAM 13836 / NRRL 3357 / JCM 12722 / SRRC 167).